A 222-amino-acid polypeptide reads, in one-letter code: Cell division protein FtsQ (222 aa).

The Cytoplasmic portion of the chain corresponds to 1–5; sequence MNKKV. A helical membrane pass occupies residues 6 to 26; that stretch reads IAIVVGVVVVLVAILGVVAWF. Residues 27 to 222 are Extracellular-facing; it reads VPILKVGNIE…ISSPSMVTVR (196 aa). Residues 30 to 98 enclose the POTRA domain; that stretch reads LKVGNIEVTG…STITVELTER (69 aa).

It belongs to the FtsQ/DivIB family. FtsQ subfamily.

It localises to the cell membrane. Essential cell division protein. The polypeptide is Cell division protein FtsQ (Corynebacterium glutamicum (strain ATCC 13032 / DSM 20300 / JCM 1318 / BCRC 11384 / CCUG 27702 / LMG 3730 / NBRC 12168 / NCIMB 10025 / NRRL B-2784 / 534)).